The following is a 182-amino-acid chain: Lipid A acyltransferase PagP (182 aa).

The first 21 residues, 1-21, serve as a signal peptide directing secretion; it reads MTQYFRALAFFLLLVPATAMA. Cys-22 carries the N-palmitoyl cysteine lipid modification. Cys-22 carries S-diacylglycerol cysteine lipidation. Catalysis depends on residues His-55, Asp-98, and Ser-99.

The protein belongs to the lipid A palmitoyltransferase family. As to quaternary structure, homodimer.

It localises to the cell outer membrane. It carries out the reaction a lipid A + a 1,2-diacyl-sn-glycero-3-phosphocholine = a hepta-acyl lipid A + a 2-acyl-sn-glycero-3-phosphocholine. It catalyses the reaction a lipid IVA + a 1,2-diacyl-sn-glycero-3-phosphocholine = a lipid IVB + a 2-acyl-sn-glycero-3-phosphocholine. The catalysed reaction is a lipid IIA + a 1,2-diacyl-sn-glycero-3-phosphocholine = a lipid IIB + a 2-acyl-sn-glycero-3-phosphocholine. In terms of biological role, transfers a fatty acid residue from the sn-1 position of a phospholipid to the N-linked hydroxyfatty acid chain on the proximal unit of lipid A or its precursors. This is Lipid A acyltransferase PagP from Bordetella parapertussis (strain 12822 / ATCC BAA-587 / NCTC 13253).